We begin with the raw amino-acid sequence, 28 residues long: Phospholipase A2 (28 aa).

Glycine 28 serves as a coordination point for Ca(2+).

Requires Ca(2+) as cofactor. Expressed by the venom gland.

Its subcellular location is the secreted. It catalyses the reaction a 1,2-diacyl-sn-glycero-3-phosphocholine + H2O = a 1-acyl-sn-glycero-3-phosphocholine + a fatty acid + H(+). Functionally, PLA2 catalyzes the calcium-dependent hydrolysis of the 2-acyl groups in 3-sn-phosphoglycerides. The polypeptide is Phospholipase A2 (Scolopendra dehaani (Thai centipede)).